Consider the following 302-residue polypeptide: Nucleoside kinase (302 aa).

The substrate site is built by aspartate 17, glutamine 33, glycine 43, and asparagine 47. Glutamine 109 contacts ATP. Residues 111-113 (TFF) and glutamine 163 each bind substrate. Residues asparagine 186 and 214 to 219 (TKGSKG) contribute to the ATP site. Aspartate 247 contacts substrate. Aspartate 247 serves as the catalytic Proton acceptor.

Homodimer. Requires Mg(2+) as cofactor. Mn(2+) is required as a cofactor.

It catalyses the reaction cytidine + ATP = CMP + ADP + H(+). The enzyme catalyses guanosine + ATP = GMP + ADP + H(+). The catalysed reaction is inosine + ATP = IMP + ADP + H(+). Functionally, catalyzes the phosphorylation of a wide range of nucleosides to yield nucleoside monophosphates. Shows the highest activity for inosine, guanosine and cytidine, but very poor kinase activity with adenosine, thymidine, uridine and xanthosine. ATP is the best phosphate donor, but can also use ITP and GTP. Shows extremely low activity with fructose-6-phosphate. The polypeptide is Nucleoside kinase (Methanocaldococcus jannaschii (strain ATCC 43067 / DSM 2661 / JAL-1 / JCM 10045 / NBRC 100440) (Methanococcus jannaschii)).